Consider the following 159-residue polypeptide: Phosphopantetheine adenylyltransferase (159 aa).

Thr-9 provides a ligand contact to substrate. Residues 9–10 and His-17 each bind ATP; that span reads TF. Substrate-binding residues include Lys-41, Leu-73, and Arg-87. Residues 88-90, Glu-98, and 123-129 each bind ATP; these read GLR and YSFISST.

The protein belongs to the bacterial CoaD family. In terms of assembly, homohexamer. It depends on Mg(2+) as a cofactor.

It localises to the cytoplasm. It carries out the reaction (R)-4'-phosphopantetheine + ATP + H(+) = 3'-dephospho-CoA + diphosphate. It participates in cofactor biosynthesis; coenzyme A biosynthesis; CoA from (R)-pantothenate: step 4/5. Its function is as follows. Reversibly transfers an adenylyl group from ATP to 4'-phosphopantetheine, yielding dephospho-CoA (dPCoA) and pyrophosphate. The sequence is that of Phosphopantetheine adenylyltransferase from Pseudomonas syringae pv. syringae (strain B728a).